Here is a 357-residue protein sequence, read N- to C-terminus: Probable dual-specificity RNA methyltransferase RlmN (357 aa).

Glu-95 serves as the catalytic Proton acceptor. The region spanning 106–340 (NRDRHTVCVS…VSVREEKGTD (235 aa)) is the Radical SAM core domain. The cysteines at positions 113 and 345 are disulfide-linked. [4Fe-4S] cluster is bound by residues Cys-120, Cys-124, and Cys-127. S-adenosyl-L-methionine contacts are provided by residues 172-173 (GE), Ser-204, 227-229 (SLH), and Asn-302. The S-methylcysteine intermediate role is filled by Cys-345.

It belongs to the radical SAM superfamily. RlmN family. It depends on [4Fe-4S] cluster as a cofactor.

It is found in the cytoplasm. The catalysed reaction is adenosine(2503) in 23S rRNA + 2 reduced [2Fe-2S]-[ferredoxin] + 2 S-adenosyl-L-methionine = 2-methyladenosine(2503) in 23S rRNA + 5'-deoxyadenosine + L-methionine + 2 oxidized [2Fe-2S]-[ferredoxin] + S-adenosyl-L-homocysteine. It catalyses the reaction adenosine(37) in tRNA + 2 reduced [2Fe-2S]-[ferredoxin] + 2 S-adenosyl-L-methionine = 2-methyladenosine(37) in tRNA + 5'-deoxyadenosine + L-methionine + 2 oxidized [2Fe-2S]-[ferredoxin] + S-adenosyl-L-homocysteine. Functionally, specifically methylates position 2 of adenine 2503 in 23S rRNA and position 2 of adenine 37 in tRNAs. This chain is Probable dual-specificity RNA methyltransferase RlmN, found in Desulfitobacterium hafniense (strain DSM 10664 / DCB-2).